A 336-amino-acid chain; its full sequence is Anthranilate phosphoribosyltransferase (336 aa).

Residues Gly79, 82–83 (GD), Thr87, 89–92 (NIST), 107–115 (KHGNRAMSS), and Ser119 each bind 5-phospho-alpha-D-ribose 1-diphosphate. Gly79 lines the anthranilate pocket. Residue Ser91 participates in Mg(2+) binding. Asn110 is an anthranilate binding site. Anthranilate is bound at residue Arg165. Residues Asp225 and Glu226 each coordinate Mg(2+).

This sequence belongs to the anthranilate phosphoribosyltransferase family. As to quaternary structure, homodimer. The cofactor is Mg(2+).

The catalysed reaction is N-(5-phospho-beta-D-ribosyl)anthranilate + diphosphate = 5-phospho-alpha-D-ribose 1-diphosphate + anthranilate. It participates in amino-acid biosynthesis; L-tryptophan biosynthesis; L-tryptophan from chorismate: step 2/5. Its function is as follows. Catalyzes the transfer of the phosphoribosyl group of 5-phosphorylribose-1-pyrophosphate (PRPP) to anthranilate to yield N-(5'-phosphoribosyl)-anthranilate (PRA). This chain is Anthranilate phosphoribosyltransferase, found in Dictyoglomus thermophilum (strain ATCC 35947 / DSM 3960 / H-6-12).